Here is a 1025-residue protein sequence, read N- to C-terminus: Protein HIRA (1025 aa).

7 WD repeats span residues 11-53 (HNGK…KEED), 68-107 (NHLACVNCVRWSNNGLYLASGGDDKLVMVWKRAALIGPST), 129-168 (NHTGDVMDVSWSPHDVWLASCSVDNTIVIWNARKFPEMVT), 172-211 (GHTGLVKGLTWDPVGKYIASQADDHSLRVWRTVDWQMEAN), 220-263 (GGTT…TNMD), 266-322 (GHRK…PLVV), and 326-367 (LFDK…DPLS). Disordered stretches follow at residues 408–433 (ERRNSTQANSGPGATGSESATPKLNS), 490–534 (GSSM…AAKV), 563–614 (RFTE…EDKM), and 634–678 (GAEV…AAGA). Composition is skewed to polar residues over residues 412–433 (STQANSGPGATGSESATPKLNS) and 490–508 (GSSMSNQLTSQLSSDSSPG). Residues 588 to 614 (ERPKESTPMQKDVKSKEDTSSDSEDKM) show a composition bias toward basic and acidic residues.

The protein belongs to the WD repeat HIR1 family.

Its subcellular location is the nucleus. Functionally, required for replication-independent chromatin assembly and for the periodic repression of histone gene transcription during the cell cycle. The chain is Protein HIRA (hira) from Takifugu rubripes (Japanese pufferfish).